Reading from the N-terminus, the 564-residue chain is Potassium-transporting ATPase potassium-binding subunit (564 aa).

Helical transmembrane passes span 4–24 (YDFALLLAFFVIVLLPAPWLG), 67–87 (TLALLAFNLVGFLLLFAVLLL), 135–155 (LGLTVQNFVSPATGLAVLVVL), 179–199 (LYGLLPLCLLLALLLVWQGVP), 258–278 (FEVASIILIPVALVFTFGHYV), 286–306 (AILACMLALFLIGGSTALWSE), 382–402 (AGLYGMLLFVLIAVFLAGLMI), 420–440 (LLVATLLVMPVGVLVLGAIAA), 487–507 (LMIGLAMLIGRFGYILPILAL), and 533–553 (GLLLVTILLVGGLTFLPTLAL).

Belongs to the KdpA family. As to quaternary structure, the system is composed of three essential subunits: KdpA, KdpB and KdpC.

The protein resides in the cell inner membrane. Its function is as follows. Part of the high-affinity ATP-driven potassium transport (or Kdp) system, which catalyzes the hydrolysis of ATP coupled with the electrogenic transport of potassium into the cytoplasm. This subunit binds the periplasmic potassium ions and delivers the ions to the membrane domain of KdpB through an intramembrane tunnel. This is Potassium-transporting ATPase potassium-binding subunit from Pseudomonas putida (strain ATCC 47054 / DSM 6125 / CFBP 8728 / NCIMB 11950 / KT2440).